The sequence spans 427 residues: MTAASRANPYSIVSSEEDGLHLVTMSGANGFGNGKVHTRRRCRNRFVKKNGQCNIEFANMDEKSQRYLADMFTTCVDIRWRYMLLIFSLAFLASWLLFGIIFWVIAVAHGDLEPAEGRGRTPCVLQVHGFMAAFLFSIETQTTIGYGLRCVTEECPVAVFMVVAQSIVGCIIDSFMIGAIMAKMARPKKRAQTLLFSHNAVVALRDGKLCLMWRVGNLRKSHIVEAHVRAQLIKPRVTEEGEYIPLDQIDIDVGFDKGLDRIFLVSPITILHEIDEASPLFGISRQDLETDDFEIVVILEGMVEATAMTTQARSSYLANEILWGHRFEPVLFEEKNQYKIDYSHFHKTYEVPSTPRCSAKDLVENKFLLPSANSFCYENELAFLSRDEEDEVATDRDGRSPQPEHDFDRLQASSAALERPYRRESEI.

The Cytoplasmic portion of the chain corresponds to 1-77; it reads MTAASRANPY…LADMFTTCVD (77 aa). Residue cysteine 75 is modified to S-nitrosocysteine. The chain crosses the membrane as a helical span at residues 78–104; sequence IRWRYMLLIFSLAFLASWLLFGIIFWV. The a 1,2-diacyl-sn-glycero-3-phospho-(1D-myo-inositol-4,5-bisphosphate) site is built by arginine 79 and arginine 81. Residues 105 to 129 lie on the Extracellular side of the membrane; that stretch reads IAVAHGDLEPAEGRGRTPCVLQVHG. Cysteine 123 and cysteine 155 are joined by a disulfide. An intramembrane region (helical; Pore-forming) is located at residues 130-146; that stretch reads FMAAFLFSIETQTTIGY. 4 residues coordinate K(+): threonine 143, isoleucine 144, glycine 145, and tyrosine 146. A Selectivity filter motif is present at residues 143 to 148; that stretch reads TIGYGL. Topologically, residues 147 to 155 are extracellular; it reads GLRCVTEEC. The helical transmembrane segment at 156 to 183 threads the bilayer; sequence PVAVFMVVAQSIVGCIIDSFMIGAIMAK. A 1,2-diacyl-sn-glycero-3-phospho-(1D-myo-inositol-4,5-bisphosphate) contacts are provided by lysine 183 and lysine 188. Topologically, residues 184–427 are cytoplasmic; that stretch reads MARPKKRAQT…ERPYRRESEI (244 aa). Residues 387-427 are disordered; sequence DEEDEVATDRDGRSPQPEHDFDRLQASSAALERPYRRESEI. Over residues 393–409 the composition is skewed to basic and acidic residues; that stretch reads ATDRDGRSPQPEHDFDR. The PDZ-binding signature appears at 425-427; sequence SEI.

This sequence belongs to the inward rectifier-type potassium channel (TC 1.A.2.1) family. KCNJ12 subfamily. Homotetramer. Forms heteromer with KCNJ4. Can form heteromeric channels with Kir2.6/KCNJ18. Association, via its PDZ-recognition domain, with LIN7A, LIN7B, LIN7C, DLG1, CASK and APBA1 plays a key role in its localization and trafficking. As to expression, highest level in cerebellum.

Its subcellular location is the membrane. The protein localises to the cell membrane. It is found in the sarcolemma. It localises to the T-tubule. The catalysed reaction is K(+)(in) = K(+)(out). Its activity is regulated as follows. Activated by phosphatidylinositol 4,5-biphosphate (PtdIns(4,5)P2). PtdIns(4,5)P2 binding to the cytoplasmic side of the channel triggers a conformation change leading to channel opening. Inhibited by Ba(2+). Its function is as follows. Inward rectifying potassium channel that probably participates in controlling the resting membrane potential in electrically excitable cells. It probably participates in establishing action potential waveform and excitability of neuronal and muscle tissues. Inward rectifier potassium channels are characterized by a greater tendency to allow potassium to flow into the cell rather than out of it. Their voltage dependence is regulated by the concentration of extracellular potassium; as external potassium is raised, the voltage range of the channel opening shifts to more positive voltages. The inward rectification is mainly due to the blockage of outward current by internal magnesium. In Mus musculus (Mouse), this protein is ATP-sensitive inward rectifier potassium channel 12 (Kcnj12).